We begin with the raw amino-acid sequence, 173 residues long: MARKEIIDEITMKRAITRITYEIIERNKELDKLVLIGIKTRGVYLAKRIQERLQQLEGLEIPFGELDTRPFRDDKQAQEDTTEIDIDITGKDVILVDDVLYTGRTIRAAIDGIVKLGRPARVQLAVLVDRGHRELPIRADYVGKNIPTGRDEEIIVQMSEHDGNDSILIKRED.

Substrate contacts are provided by residues 40 to 41, 97 to 105, and R130; these read TR and DDVLYTGRT. Residues 93–105 carry the PRPP-binding motif; it reads VILVDDVLYTGRT.

It belongs to the purine/pyrimidine phosphoribosyltransferase family. PyrR subfamily.

Its function is as follows. Regulates transcriptional attenuation of the pyrimidine nucleotide (pyr) operon in response to exogenous pyrimidines, probably by binding to specific sites on pyr mRNA. This probably disrupts an antiterminator hairpin in the RNA and favors formation of a downstream transcription terminator, leading to a reduced expression of downstream genes. The chain is Pyrimidine operon regulatory protein from Lactococcus lactis subsp. lactis (strain IL1403) (Streptococcus lactis).